Reading from the N-terminus, the 231-residue chain is 7-cyano-7-deazaguanine synthase (231 aa).

8–18 (FSGGQDSTTCL) serves as a coordination point for ATP. Positions 187, 196, 199, and 202 each coordinate Zn(2+).

Belongs to the QueC family. Requires Zn(2+) as cofactor.

It carries out the reaction 7-carboxy-7-deazaguanine + NH4(+) + ATP = 7-cyano-7-deazaguanine + ADP + phosphate + H2O + H(+). It participates in purine metabolism; 7-cyano-7-deazaguanine biosynthesis. In terms of biological role, catalyzes the ATP-dependent conversion of 7-carboxy-7-deazaguanine (CDG) to 7-cyano-7-deazaguanine (preQ(0)). The polypeptide is 7-cyano-7-deazaguanine synthase (Vibrio vulnificus (strain CMCP6)).